Reading from the N-terminus, the 283-residue chain is Pantothenate synthetase (283 aa).

ATP is bound at residue 31–38 (MGALHDGH). His-38 (proton donor) is an active-site residue. Residue Gln-62 coordinates (R)-pantoate. Gln-62 lines the beta-alanine pocket. 148-151 (GKKD) contributes to the ATP binding site. Gln-154 contributes to the (R)-pantoate binding site. Residues Val-177 and 185-188 (KSSR) each bind ATP.

It belongs to the pantothenate synthetase family. In terms of assembly, homodimer.

Its subcellular location is the cytoplasm. The catalysed reaction is (R)-pantoate + beta-alanine + ATP = (R)-pantothenate + AMP + diphosphate + H(+). The protein operates within cofactor biosynthesis; (R)-pantothenate biosynthesis; (R)-pantothenate from (R)-pantoate and beta-alanine: step 1/1. Catalyzes the condensation of pantoate with beta-alanine in an ATP-dependent reaction via a pantoyl-adenylate intermediate. The chain is Pantothenate synthetase from Staphylococcus aureus (strain USA300).